Consider the following 297-residue polypeptide: Bifunctional protein FolD 1 (297 aa).

Residues 174 to 176 (GRS), S199, and I240 each bind NADP(+).

Belongs to the tetrahydrofolate dehydrogenase/cyclohydrolase family. As to quaternary structure, homodimer.

The catalysed reaction is (6R)-5,10-methylene-5,6,7,8-tetrahydrofolate + NADP(+) = (6R)-5,10-methenyltetrahydrofolate + NADPH. It carries out the reaction (6R)-5,10-methenyltetrahydrofolate + H2O = (6R)-10-formyltetrahydrofolate + H(+). It functions in the pathway one-carbon metabolism; tetrahydrofolate interconversion. Catalyzes the oxidation of 5,10-methylenetetrahydrofolate to 5,10-methenyltetrahydrofolate and then the hydrolysis of 5,10-methenyltetrahydrofolate to 10-formyltetrahydrofolate. This Acinetobacter baylyi (strain ATCC 33305 / BD413 / ADP1) protein is Bifunctional protein FolD 1.